A 136-amino-acid polypeptide reads, in one-letter code: Histone H2A (136 aa).

Residues 1 to 11 (MTGGKSAGGKA) show a composition bias toward gly residues. Residues 1–23 (MTGGKSAGGKAGTTKNAQSRSSK) form a disordered region. N6-acetyllysine occurs at positions 5 and 10. Position 107 is an N5-methylglutamine (glutamine 107). Serine 133 bears the Phosphoserine mark. The [ST]-Q motif signature appears at 133–134 (SQ).

This sequence belongs to the histone H2A family. The nucleosome is a histone octamer containing two molecules each of H2A, H2B, H3 and H4 assembled in one H3-H4 heterotetramer and two H2A-H2B heterodimers. The octamer wraps approximately 147 bp of DNA. Post-translationally, phosphorylated to form H2AS128ph (gamma-H2A) in response to DNA double-strand breaks (DSBs) generated by exogenous genotoxic agents and by stalled replication forks. Phosphorylation is dependent on the DNA damage checkpoint kinases MEC1/ATR and TEL1/ATM, spreads on either side of a detected DSB site and may mark the surrounding chromatin for recruitment of proteins required for DNA damage signaling and repair. Gamma-H2A is removed from the DNA prior to the strand invasion-primer extension step of the repair process and subsequently dephosphorylated. Dephosphorylation is necessary for efficient recovery from the DNA damage checkpoint. Acetylated by ESA1 to form H2AK4ac and H2AK7ac.

It is found in the nucleus. It localises to the chromosome. Core component of nucleosome which plays a central role in DNA double strand break (DSB) repair. Nucleosomes wrap and compact DNA into chromatin, limiting DNA accessibility to the cellular machineries which require DNA as a template. Histones thereby play a central role in transcription regulation, DNA repair, DNA replication and chromosomal stability. DNA accessibility is regulated via a complex set of post-translational modifications of histones, also called histone code, and nucleosome remodeling. The chain is Histone H2A (hta1) from Botryotinia fuckeliana (strain B05.10) (Noble rot fungus).